The chain runs to 129 residues: Small ribosomal subunit protein uS11 (129 aa).

Belongs to the universal ribosomal protein uS11 family. Part of the 30S ribosomal subunit. Interacts with proteins S7 and S18. Binds to IF-3.

Its function is as follows. Located on the platform of the 30S subunit, it bridges several disparate RNA helices of the 16S rRNA. Forms part of the Shine-Dalgarno cleft in the 70S ribosome. This Bradyrhizobium sp. (strain ORS 278) protein is Small ribosomal subunit protein uS11.